Consider the following 270-residue polypeptide: 1-deoxy-11-beta-hydroxypentalenate dehydrogenase (270 aa).

12–36 (GAASGIGFALSARLAQAGARVVMTD) contacts NAD(+). Residue serine 144 participates in substrate binding. The active-site Proton acceptor is tyrosine 157. Lysine 161 is an NAD(+) binding site.

It belongs to the short-chain dehydrogenases/reductases (SDR) family.

The enzyme catalyses 1-deoxy-11beta-hydroxypentalenate + NAD(+) = 1-deoxy-11-oxopentalenate + NADH + H(+). Its pathway is antibiotic biosynthesis; neopentalenolactone biosynthesis. Catalyzes the oxidation of 1-deoxy-11-beta-hydroxypentalenic acid to 1-deoxy-11-oxopentalenic acid in the biosynthesis of neopentalenolactone antibiotic. This Streptomyces avermitilis (strain ATCC 31267 / DSM 46492 / JCM 5070 / NBRC 14893 / NCIMB 12804 / NRRL 8165 / MA-4680) protein is 1-deoxy-11-beta-hydroxypentalenate dehydrogenase (ptlF).